A 234-amino-acid polypeptide reads, in one-letter code: UPF0758 protein Rfer_3252 (234 aa).

The 123-residue stretch at 112-234 folds into the MPN domain; it reads IFATPDAVKH…ALSMAERGLL (123 aa). Positions 183, 185, and 196 each coordinate Zn(2+). The short motif at 183 to 196 is the JAMM motif element; it reads HNHPSGTVQPSRAD.

This sequence belongs to the UPF0758 family.

The chain is UPF0758 protein Rfer_3252 from Albidiferax ferrireducens (strain ATCC BAA-621 / DSM 15236 / T118) (Rhodoferax ferrireducens).